The following is a 116-amino-acid chain: Immunoglobulin heavy variable 2-4 (116 aa).

The signal sequence occupies residues Met1–Ser19. An Ig-like domain is found at Gln20–Lys116. The cysteines at positions 41 and 114 are disulfide-linked.

The polypeptide is Immunoglobulin heavy variable 2-4 (Mus musculus (Mouse)).